Here is a 488-residue protein sequence, read N- to C-terminus: DNA polymerase II small subunit (488 aa).

Belongs to the DNA polymerase delta/II small subunit family. Heterodimer of a large subunit and a small subunit.

It catalyses the reaction DNA(n) + a 2'-deoxyribonucleoside 5'-triphosphate = DNA(n+1) + diphosphate. The catalysed reaction is Exonucleolytic cleavage in the 3'- to 5'-direction to yield nucleoside 5'-phosphates.. Possesses two activities: a DNA synthesis (polymerase) and an exonucleolytic activity that degrades single-stranded DNA in the 3' to 5' direction. Has a template-primer preference which is characteristic of a replicative DNA polymerase. This chain is DNA polymerase II small subunit (polB), found in Archaeoglobus fulgidus (strain ATCC 49558 / DSM 4304 / JCM 9628 / NBRC 100126 / VC-16).